A 1294-amino-acid chain; its full sequence is CLIP-associating protein 2 (1294 aa).

The segment at 1-61 (MAMGDDKSFD…KVGGASKEGG (61 aa)) is disordered. 2 positions are modified to phosphoserine: S8 and S14. The span at 47–61 (SAGGPKVGGASKEGG) shows a compositional bias: gly residues. Positions 60-311 (GGAGAVDEDD…KSLQTYLKSS (252 aa)) are TOG 1. 3 HEAT repeats span residues 173-208 (HGAE…IRHT), 209-245 (HVPR…EWQT), and 250-287 (RHAA…HFPG). Positions 314–368 (VASLPQSDRSSSSSQESLNRPFSSKWSTANPSTVAGRVSAGSSKASSLPGSLQRS) are disordered. Phosphoserine is present on residues S316, S327, and S330. Low complexity predominate over residues 316-334 (SLPQSDRSSSSSQESLNRP). 2 stretches are compositionally biased toward polar residues: residues 335–346 (FSSKWSTANPST) and 353–367 (AGSS…SLQR). Residues S360, S368, S370, and S407 each carry the phosphoserine modification. The segment at 409–467 (EDTSDKLDGTASEDGRVRAKLSAPLAGMGNAKADSRGRSRTKMVSQSQPGSRSGSPGRV) is disordered. Basic and acidic residues predominate over residues 411–425 (TSDKLDGTASEDGRV). The interval 444–580 (RGRSRTKMVS…GPGYGISQSS (137 aa)) is interaction with microtubules, MAPRE1 and MAPRE3. A compositionally biased stretch (low complexity) spans 453–467 (SQSQPGSRSGSPGRV). Phosphoserine is present on residues S455, S459, S463, S478, and S489. A disordered region spans residues 488–557 (ASAQKRSKIP…PLASRHHSRS (70 aa)). The SXIP motif 1; mediates interaction with MAPRE1 and targeting to microtubule plus ends motif lies at 494 to 497 (SKIP). S507 carries the phosphoserine modification. An SXIP motif 2; mediates interaction with MAPRE1 and targeting to microtubule plus ends motif is present at residues 517–520 (SRIP). A phosphoserine mark is found at S525, S529, S585, S587, S596, S621, and S627. The interval 617 to 645 (YGMHSDDDANSDASSACSERSYSSRNGSI) is disordered. Positions 627 to 641 (SDASSACSERSYSSR) are enriched in low complexity. Positions 649-881 (MRQTEDVAEV…TKLLHNHLRN (233 aa)) are TOG 2. HEAT repeat units follow at residues 710–747 (RVFS…KMGA) and 772–809 (LQFN…QMDP). At T787 the chain carries Phosphothreonine. Positions 872–1294 (TKLLHNHLRN…DPTTDVSGQS (423 aa)) are interaction with RSN and localization to the Golgi and kinetochores. Disordered stretches follow at residues 878 to 928 (HLRN…FDYD) and 952 to 995 (SFRS…DSSQ). Polar residues-rich tracts occupy residues 880–892 (RNTG…SMGS) and 901–922 (SPAN…TLSP). At S892 the chain carries Phosphoserine. Phosphoserine is present on residues S952, S955, S1013, and S1029. Over residues 955–972 (SQEDMNEPLKRDSKKDDG) the composition is skewed to basic and acidic residues. Positions 1017-1294 (RDYNPYNYSD…DPTTDVSGQS (278 aa)) are required for cortical localization. HEAT repeat units lie at residues 1054–1091 (LDHS…TQEE), 1098–1135 (EHFK…HQPA), and 1216–1253 (LLLP…VIGD).

Belongs to the CLASP family. As to quaternary structure, interacts with microtubules. Interacts with MAPRE1; probably required for targeting to the growing microtubule plus ends. Interacts with CLIP2, ERC1, MAPRE3, PHLDB2 and RSN. The interaction with ERC1 may be mediated by PHLDB2. Interacts with GCC2; recruits CLASP2 to Golgi membranes. Interacts with MACF1. Interacts with mtcl2 and MTCL1. Post-translationally, phosphorylated by GSK3B. Phosphorylation reduces MAPRE1 binding. Phosphorylation by GSK3B may negatively regulate binding to microtubule lattices in lamella. As to expression, brain-specific.

It localises to the cytoplasm. It is found in the cytoskeleton. Its subcellular location is the microtubule organizing center. The protein resides in the centrosome. The protein localises to the chromosome. It localises to the centromere. It is found in the kinetochore. Its subcellular location is the spindle. The protein resides in the golgi apparatus. The protein localises to the trans-Golgi network. It localises to the cell membrane. It is found in the cell projection. Its subcellular location is the ruffle membrane. The protein resides in the cell cortex. Its function is as follows. Microtubule plus-end tracking protein that promotes the stabilization of dynamic microtubules. Involved in the nucleation of noncentrosomal microtubules originating from the trans-Golgi network (TGN). Required for the polarization of the cytoplasmic microtubule arrays in migrating cells towards the leading edge of the cell. May act at the cell cortex to enhance the frequency of rescue of depolymerizing microtubules by attaching their plus-ends to cortical platforms composed of ERC1 and PHLDB2. This cortical microtubule stabilizing activity is regulated at least in part by phosphatidylinositol 3-kinase signaling. Also performs a similar stabilizing function at the kinetochore which is essential for the bipolar alignment of chromosomes on the mitotic spindle. Acts as a mediator of ERBB2-dependent stabilization of microtubules at the cell cortex. This is CLIP-associating protein 2 (CLASP2) from Homo sapiens (Human).